Reading from the N-terminus, the 309-residue chain is Phosphoserine phosphatase (309 aa).

Residue D97 is the Nucleophile of the active site. D97 and D99 together coordinate Mg(2+). Residue D99 is the Proton donor of the active site. Substrate is bound by residues E106, R142, 186–187 (SG), and K232. A Mg(2+)-binding site is contributed by D255. N258 is a substrate binding site.

Belongs to the HAD-like hydrolase superfamily. SerB family. It depends on Mg(2+) as a cofactor.

The catalysed reaction is O-phospho-L-serine + H2O = L-serine + phosphate. It carries out the reaction O-phospho-D-serine + H2O = D-serine + phosphate. It functions in the pathway amino-acid biosynthesis; L-serine biosynthesis; L-serine from 3-phospho-D-glycerate: step 3/3. The protein is Phosphoserine phosphatase (SER2) of Saccharomyces cerevisiae (strain ATCC 204508 / S288c) (Baker's yeast).